Reading from the N-terminus, the 225-residue chain is 3-dehydroquinate dehydratase (225 aa).

3-dehydroquinate-binding positions include E30–R32 and R62. The active-site Proton donor/acceptor is the H118. K143 (schiff-base intermediate with substrate) is an active-site residue. Positions 186, 205, and 209 each coordinate 3-dehydroquinate.

This sequence belongs to the type-I 3-dehydroquinase family. Homodimer.

It carries out the reaction 3-dehydroquinate = 3-dehydroshikimate + H2O. Its pathway is metabolic intermediate biosynthesis; chorismate biosynthesis; chorismate from D-erythrose 4-phosphate and phosphoenolpyruvate: step 3/7. Functionally, involved in the third step of the chorismate pathway, which leads to the biosynthesis of aromatic amino acids. Catalyzes the cis-dehydration of 3-dehydroquinate (DHQ) and introduces the first double bond of the aromatic ring to yield 3-dehydroshikimate. The chain is 3-dehydroquinate dehydratase from Streptococcus mutans serotype c (strain ATCC 700610 / UA159).